Consider the following 255-residue polypeptide: Acetyl-coenzyme A carboxylase carboxyl transferase subunit alpha (255 aa).

Positions 1-235 (MNIAKIVREA…KKELQTELAR (235 aa)) constitute a CoA carboxyltransferase C-terminal domain.

This sequence belongs to the AccA family. As to quaternary structure, acetyl-CoA carboxylase is a heterohexamer composed of biotin carboxyl carrier protein (AccB), biotin carboxylase (AccC) and two subunits each of ACCase subunit alpha (AccA) and ACCase subunit beta (AccD).

Its subcellular location is the cytoplasm. It catalyses the reaction N(6)-carboxybiotinyl-L-lysyl-[protein] + acetyl-CoA = N(6)-biotinyl-L-lysyl-[protein] + malonyl-CoA. Its pathway is lipid metabolism; malonyl-CoA biosynthesis; malonyl-CoA from acetyl-CoA: step 1/1. Component of the acetyl coenzyme A carboxylase (ACC) complex. First, biotin carboxylase catalyzes the carboxylation of biotin on its carrier protein (BCCP) and then the CO(2) group is transferred by the carboxyltransferase to acetyl-CoA to form malonyl-CoA. The chain is Acetyl-coenzyme A carboxylase carboxyl transferase subunit alpha from Streptococcus pneumoniae (strain CGSP14).